A 1341-amino-acid chain; its full sequence is WASH complex subunit 2A (1341 aa).

Positions 1–220 (MMNRTTPDQE…VGSDRGSIVD (220 aa)) are sufficient for interaction with WASHC3, WASHC4 and WASHC5; required for interaction with WASHC1. Low complexity predominate over residues 202–214 (GELSSEEGSVGSD). A disordered region spans residues 202–405 (GELSSEEGSV…SSSKPGKKIP (204 aa)). The span at 220-232 (DTEEEKEEEESDE) shows a compositional bias: acidic residues. The segment covering 233 to 244 (DFAHHSDNEQNR) has biased composition (basic and acidic residues). 2 stretches are compositionally biased toward acidic residues: residues 250-259 (SDEEEDDDGC) and 266-276 (EKEEEDIEDIE). The span at 293–307 (LAARIKGDAVGRVDE) shows a compositional bias: basic and acidic residues. The span at 355–366 (GSGGGLFSGGKG) shows a compositional bias: gly residues. The interval 356 to 600 (SGGGLFSGGK…QTLCLQAQRE (245 aa)) is sufficient for interaction with CCDC93. Residues 356 to 742 (SGGGLFSGGK…KEAQLGVKSV (387 aa)) are required for interaction with CCDC22 and VPS35L. Positions 357–1341 (GGGLFSGGKG…DDPLNAFGGQ (985 aa)) are interaction with VPS35. 4 short sequence motifs (LFa) span residues 367-378 (LFDDEDEESDLF), 411-419 (VFLGDTDVF), 450-463 (LFDD…DDFF), and 482-491 (IFGDEEGDLF). The disordered stretch occupies residues 422–554 (ASVPSMKEPQ…EDLFSSQSAS (133 aa)). Positions 451-462 (FDDDDGDDDDDF) are enriched in acidic residues. Positions 507-517 (DENKARAEKKV) are enriched in basic and acidic residues. The span at 518–536 (TLSSSKNLKPSSETKTQKG) shows a compositional bias: polar residues. 3 short sequence motifs (LFa) span residues 537–548 (LFSDEEDSEDLF), 572–583 (LFDDEDEEDNLF), and 617–629 (LFSS…WNIP). Serine 539 is modified (phosphoserine). Disordered regions lie at residues 621 to 664 (DEED…KTSL), 696 to 739 (DSGG…QLGV), and 751 to 838 (ESLK…KSTG). The segment covering 637–647 (SDSRSKGEPRD) has biased composition (basic and acidic residues). Short sequence motifs (LFa) lie at residues 664 to 674 (LFEEDEEDDLF), 690 to 702 (LFED…GSLF), and 726 to 738 (LFSD…AQLG). Basic and acidic residues predominate over residues 751-768 (ESLKFGRTDVAESEKEGL). The short motif at 803-817 (LFDEEEDKMEDQNII) is the LFa 11 element. Over residues 823–834 (EVGKGRDPDAHP) the composition is skewed to basic and acidic residues. 3 short sequence motifs (LFa) span residues 839–847 (VFQDEELLF), 856–862 (DPDVDLF), and 878–888 (LFGDDEDDDLF). Disordered stretches follow at residues 881 to 951 (DDED…KEPS) and 988 to 1205 (FPSS…LEDE). 2 stretches are compositionally biased toward basic and acidic residues: residues 898-911 (QEKK…HSVD) and 917-931 (KHPE…KGIW). Positions 937–1341 (QDSSGLAPFK…DDPLNAFGGQ (405 aa)) are interaction with phospholipids. Basic residues predominate over residues 1028–1046 (NKSRVKMRGKRRPQTRAAR). The interval 1029–1047 (KSRVKMRGKRRPQTRAARR) is required for interaction with F-actin-capping protein subunit alpha (CAPZA1 or CAPZA2 or CAPZA3). Serine 1054 and serine 1087 each carry phosphoserine. Positions 1094–1110 (EALAAAAAPWEGGPVPG) are enriched in low complexity. At serine 1114 the chain carries Phosphoserine. 6 short sequence motifs (LFa) span residues 1129-1136 (LFDSGDIF), 1171-1185 (MFPA…DDLF), 1201-1209 (LLEDEDDLF), 1234-1240 (IFEDDIF), 1262-1270 (LFDDNIDIF), and 1290-1299 (IFDDDMDDIF). Residues 1135-1145 (IFSTGTGSQSV) show a composition bias toward polar residues. A disordered region spans residues 1302 to 1326 (GIQAKTTKPKSRSAQAAPEPRFEHK). An LFa 21 motif is present at residues 1330 to 1338 (IFDDPLNAF).

This sequence belongs to the FAM21 family. In terms of assembly, component of the WASH core complex also described as WASH regulatory complex (SHRC) composed of WASH (WASHC1, WASH2P or WASH3P), WASHC2 (WASHC2A or WASHC2C), WASHC3, WASHC4 and WASHC5; in the complex interacts (via N-terminus) directly with WASHC1. The WASH core complex associates with the F-actin-capping protein dimer (formed by CAPZA1, CAPZA2 or CAPZA3 and CAPZB) in a transient or substoichiometric manner which was initially described as WASH complex. Interacts with VPS35; mediates the association with the retromer CSC complex. Interacts with FKBP15. Interacts with CCDC93, CCDC22, VPS35L; indicative for an association of the WASH core complex with the CCC and retriever complexes. Directly interacts with TBC1D23.

The protein resides in the early endosome membrane. It localises to the cell membrane. Functionally, acts at least in part as component of the WASH core complex whose assembly at the surface of endosomes inhibits WASH nucleation-promoting factor (NPF) activity in recruiting and activating the Arp2/3 complex to induce actin polymerization and is involved in the fission of tubules that serve as transport intermediates during endosome sorting. Mediates the recruitment of the WASH core complex to endosome membranes via binding to phospholipids and VPS35 of the retromer CSC. Mediates the recruitment of the F-actin-capping protein dimer to the WASH core complex probably promoting localized F-actin polymerization needed for vesicle scission. Via its C-terminus binds various phospholipids, most strongly phosphatidylinositol 4-phosphate (PtdIns-(4)P), phosphatidylinositol 5-phosphate (PtdIns-(5)P) and phosphatidylinositol 3,5-bisphosphate (PtdIns-(3,5)P2). Involved in the endosome-to-plasma membrane trafficking and recycling of SNX27-retromer-dependent cargo proteins, such as GLUT1. Required for the association of DNAJC13, ENTR1, ANKRD50 with retromer CSC subunit VPS35. Required for the endosomal recruitment of CCC complex subunits COMMD1 and CCDC93 as well as the retriever complex subunit VPS35L. The polypeptide is WASH complex subunit 2A (Homo sapiens (Human)).